A 972-amino-acid polypeptide reads, in one-letter code: uncharacterized protein (972 aa).

A signal peptide spans 1–21 (MTNMILLSAVFLSLAILETHC). At 22 to 932 (ANHISTGIST…KELGEKLYHV (911 aa)) the chain is on the extracellular side. A disordered region spans residues 892 to 912 (EPTVTTTTESPPPPTTTTRQI). A helical membrane pass occupies residues 933–953 (LFFMGVLTVSVAGGVIILSFI). Over 954–972 (GCLIMRKMEDAPQKTKYSV) the chain is Cytoplasmic.

The protein localises to the host membrane. This is an uncharacterized protein from Magallana gigas (Pacific oyster).